We begin with the raw amino-acid sequence, 427 residues long: Glutamate-1-semialdehyde 2,1-aminomutase (427 aa).

An N6-(pyridoxal phosphate)lysine modification is found at Lys265.

This sequence belongs to the class-III pyridoxal-phosphate-dependent aminotransferase family. HemL subfamily. As to quaternary structure, homodimer. Requires pyridoxal 5'-phosphate as cofactor.

Its subcellular location is the cytoplasm. The enzyme catalyses (S)-4-amino-5-oxopentanoate = 5-aminolevulinate. It functions in the pathway porphyrin-containing compound metabolism; protoporphyrin-IX biosynthesis; 5-aminolevulinate from L-glutamyl-tRNA(Glu): step 2/2. This Pseudomonas putida (strain ATCC 47054 / DSM 6125 / CFBP 8728 / NCIMB 11950 / KT2440) protein is Glutamate-1-semialdehyde 2,1-aminomutase.